Here is a 533-residue protein sequence, read N- to C-terminus: Solute carrier family 2, facilitated glucose transporter member 2 (533 aa).

The Cytoplasmic segment spans residues 1 to 17 (MDGKSKMQAEKHLTGTL). Residues 18 to 38 (VLSVFTAVLGFFQYGYSLGVI) form a helical membrane-spanning segment. The Extracellular portion of the chain corresponds to 39–110 (NAPQKVIEAH…SPHILTMYWS (72 aa)). Residues Asn64 and Asn69 are each glycosylated (N-linked (GlcNAc...) asparagine). A helical transmembrane segment spans residues 111–131 (LSVSMFAVGGMVSSFTVGWIG). Topologically, residues 132-136 (DRLGR) are cytoplasmic. The chain crosses the membrane as a helical span at residues 137-157 (VKAMLVVNVLSIAGNLLMGLA). Topologically, residues 158–163 (KMGPSH) are extracellular. A helical membrane pass occupies residues 164-184 (ILIIAGRAITGLYCGLSSGLV). Over 185 to 199 (PMYVSEVSPTALRGA) the chain is Cytoplasmic. A helical membrane pass occupies residues 200–220 (LGTLHQLAIVTGILISQVLGL). Gln205 provides a ligand contact to D-glucose. Residues 221 to 229 (DFLLGNDEL) are Extracellular-facing. Residues 230 to 250 (WPLLLGLSGVAALLQFFLLLL) form a helical membrane-spanning segment. Residues 251-315 (CPESPRYLYI…LFSSSKYRQA (65 aa)) lie on the Cytoplasmic side of the membrane. A helical membrane pass occupies residues 316 to 336 (VIVALMVQISQQFSGINAIFY). Residues 326 to 327 (QQ) and Asn332 contribute to the D-glucose site. Topologically, residues 337-350 (YSTNIFQRAGVGQP) are extracellular. Residues 351–371 (VYATIGVGVVNTVFTVISVFL) form a helical membrane-spanning segment. Residue Asn361 participates in D-glucose binding. At 372–379 (VEKAGRRS) the chain is on the cytoplasmic side. A helical transmembrane segment spans residues 380-400 (LFLAGLMGMLISAVAMTVGLV). Residues 401–413 (LLSQFAWMSYVSM) lie on the Extracellular side of the membrane. A helical membrane pass occupies residues 414-434 (VAIFLFVIFFEVGPGPIPWFI). Positions 424 and 432 each coordinate D-glucose. Residues 435-445 (VAELFSQGPRP) lie on the Cytoplasmic side of the membrane. The helical transmembrane segment at 446–466 (AAIAVAGFCNWACNFIVGMCF) threads the bilayer. Residues 467–471 (QYIAD) lie on the Extracellular side of the membrane. The helical transmembrane segment at 472–492 (LCGPYVFVVFAVLLLVFFLFA) threads the bilayer. At 493–533 (YLKVPETKGKSFEEIAAAFRRKKLPAKSMTELEDLRGGEEA) the chain is on the cytoplasmic side.

This sequence belongs to the major facilitator superfamily. Sugar transporter (TC 2.A.1.1) family. Glucose transporter subfamily.

Its subcellular location is the cell membrane. It catalyses the reaction D-glucose(out) = D-glucose(in). The catalysed reaction is D-fructose(out) = D-fructose(in). The enzyme catalyses L-dehydroascorbate(out) = L-dehydroascorbate(in). It carries out the reaction D-galactose(in) = D-galactose(out). With respect to regulation, D-glucose and maltose competitively inhibit fructose transport. D-glucose, D-fructose and maltose inhibit deoxyglucose transport. In terms of biological role, facilitative hexose transporter that mediates the transport of glucose, fructose and galactose. Likely mediates the bidirectional transfer of glucose across the plasma membrane of hepatocytes and is responsible for uptake of glucose by the beta cells. This is Solute carrier family 2, facilitated glucose transporter member 2 from Gallus gallus (Chicken).